Consider the following 1399-residue polypeptide: DNA-directed RNA polymerase subunit beta' (1399 aa).

Positions 71, 73, 86, and 89 each coordinate Zn(2+). Mg(2+) contacts are provided by Asp462, Asp464, and Asp466. Zn(2+) contacts are provided by Cys810, Cys884, Cys891, and Cys894. Positions 1379 to 1399 are disordered; sequence KQAAIVPSQPEPQPLALPPAE. Positions 1387-1399 are enriched in pro residues; sequence QPEPQPLALPPAE.

This sequence belongs to the RNA polymerase beta' chain family. In terms of assembly, the RNAP catalytic core consists of 2 alpha, 1 beta, 1 beta' and 1 omega subunit. When a sigma factor is associated with the core the holoenzyme is formed, which can initiate transcription. It depends on Mg(2+) as a cofactor. The cofactor is Zn(2+).

The enzyme catalyses RNA(n) + a ribonucleoside 5'-triphosphate = RNA(n+1) + diphosphate. Its function is as follows. DNA-dependent RNA polymerase catalyzes the transcription of DNA into RNA using the four ribonucleoside triphosphates as substrates. The sequence is that of DNA-directed RNA polymerase subunit beta' from Bradyrhizobium sp. (strain BTAi1 / ATCC BAA-1182).